Reading from the N-terminus, the 576-residue chain is MALLQTSLIWAVYAIVVAVLVMVASVFIYTYQTPRDRSSVVTFTCIVAITSLLATVLLLPVDVALTSSTTSSKLGQRKPWATQDEVDKIVSLLTAVYYLLYSLDAFLCLLAIPFVYFWYEEYDEVAVESGEQSAAKRLWTAFKYTISFIAIVVVLFIVGFLVPVANIKDSKVSDYLRKLLAENRGERVLTFTLGLLITMGLFLYILYTSTGLAVLPMRMIRAAPSVSDMTWKASTSAQLESNRERQRQLEGRCRGDPGLLSSKERRELDTLVRDERTLIRRQRLAEEADGEGQSRFMRAWLKTTAFFRPLKLLGGIAILLITLMIWISMLLTAIDKAKNSICKQRCGYILSGIGVFNPINWIFVQSAKVFPIDYAVLTVVVLLLFGSSVVGISTIGIRFLWIRIFHVRKGHTSPQALLLTTAMLMLTILALDYSIPMLVAPQYATFGPQTFCDRPQGQQSDCLTNKHLIKPCSELTDNTAAKRVCTPSVTSMFLNRVTISYPFFGTVFFWSQFIFLVIYLLVLVTSFIRHPKLDERLLDQEAEEAEEERLLTSSARGVGDTYQSVGGRNNFSTRAG.

10 helical membrane passes run 8-28, 40-60, 98-118, 145-165, 188-208, 312-332, 347-367, 377-397, 419-439, and 503-523; these read LIWA…SVFI, VVTF…LLLP, YLLY…VYFW, TISF…VPVA, VLTF…ILYT, LLGG…MLLT, GYIL…VQSA, LTVV…TIGI, LTTA…PMLV, and FFGT…LLVL. The disordered stretch occupies residues 549 to 576; the sequence is RLLTSSARGVGDTYQSVGGRNNFSTRAG. A compositionally biased stretch (polar residues) spans 561–576; that stretch reads TYQSVGGRNNFSTRAG. The N-linked (GlcNAc...) asparagine glycan is linked to N570.

The protein belongs to the LIMR family. LMBRD1 subfamily.

The protein localises to the lysosome membrane. Its function is as follows. Probable lysosomal cobalamin transporter. Required to export cobalamin from lysosomes allowing its conversion to cofactors. The chain is Probable lysosomal cobalamin transporter from Aspergillus niger (strain ATCC MYA-4892 / CBS 513.88 / FGSC A1513).